The chain runs to 387 residues: 3-ketoacyl-CoA thiolase (387 aa).

Cysteine 91 functions as the Acyl-thioester intermediate in the catalytic mechanism. Catalysis depends on proton acceptor residues histidine 343 and cysteine 373.

The protein belongs to the thiolase-like superfamily. Thiolase family. In terms of assembly, heterotetramer of two alpha chains (FadB) and two beta chains (FadA).

Its subcellular location is the cytoplasm. The catalysed reaction is an acyl-CoA + acetyl-CoA = a 3-oxoacyl-CoA + CoA. The protein operates within lipid metabolism; fatty acid beta-oxidation. In terms of biological role, catalyzes the final step of fatty acid oxidation in which acetyl-CoA is released and the CoA ester of a fatty acid two carbons shorter is formed. The protein is 3-ketoacyl-CoA thiolase of Salmonella paratyphi A (strain ATCC 9150 / SARB42).